Here is a 661-residue protein sequence, read N- to C-terminus: UvrABC system protein B (661 aa).

The 387-residue stretch at 28 to 414 (DGVNERKRHQ…HTDEMVEQII (387 aa)) folds into the Helicase ATP-binding domain. An ATP-binding site is contributed by 41-48 (GATGTGKT). A Beta-hairpin motif is present at residues 94–117 (YYDYYQPEAYVPSTDTFIEKDASI). In terms of domain architecture, Helicase C-terminal spans 432–598 (QIDDLLSEIQ…TINKKIHDVI (167 aa)). A disordered region spans residues 603-624 (ESDETNQQQQTELPKKMTKKER). Positions 625 to 660 (QKTIENIEKEMKKAAKDLDFEKATELRDMLFELKAE) constitute a UVR domain.

The protein belongs to the UvrB family. Forms a heterotetramer with UvrA during the search for lesions. Interacts with UvrC in an incision complex.

Its subcellular location is the cytoplasm. The UvrABC repair system catalyzes the recognition and processing of DNA lesions. A damage recognition complex composed of 2 UvrA and 2 UvrB subunits scans DNA for abnormalities. Upon binding of the UvrA(2)B(2) complex to a putative damaged site, the DNA wraps around one UvrB monomer. DNA wrap is dependent on ATP binding by UvrB and probably causes local melting of the DNA helix, facilitating insertion of UvrB beta-hairpin between the DNA strands. Then UvrB probes one DNA strand for the presence of a lesion. If a lesion is found the UvrA subunits dissociate and the UvrB-DNA preincision complex is formed. This complex is subsequently bound by UvrC and the second UvrB is released. If no lesion is found, the DNA wraps around the other UvrB subunit that will check the other stand for damage. In Staphylococcus epidermidis (strain ATCC 12228 / FDA PCI 1200), this protein is UvrABC system protein B.